A 314-amino-acid polypeptide reads, in one-letter code: MSSVIFLGTPNFGSVVLQGLIDQGYDVKAVVTQPDKRVGRKQVVHQSAVKQTALKHNLPVYQPAKLSGSDELAELMKIEPDFIVTAAYGQFLPTKFLKSAKIAPVNVHGSLLPKYRGGAPIQYSVLNGDKETGVTIMEMVKKMDAGDIFSQKALPIEDDDTSGTLFDKLSILGRDLLLETLPKFIDGTVTRTPQNEDKVVFSPNISKEQEQIKLTMTAEQANNLIRALNPDPGAYVMLDGKRFKIWKAKPLAEKTSFPAGTLVTNKKKFVISMAGGSELELLEVQPTGKKKMNIKDYLNGQGSHFTSGEKIIDE.

Residue Ser110–Pro113 participates in (6S)-5,6,7,8-tetrahydrofolate binding.

Belongs to the Fmt family.

It catalyses the reaction L-methionyl-tRNA(fMet) + (6R)-10-formyltetrahydrofolate = N-formyl-L-methionyl-tRNA(fMet) + (6S)-5,6,7,8-tetrahydrofolate + H(+). Functionally, attaches a formyl group to the free amino group of methionyl-tRNA(fMet). The formyl group appears to play a dual role in the initiator identity of N-formylmethionyl-tRNA by promoting its recognition by IF2 and preventing the misappropriation of this tRNA by the elongation apparatus. The protein is Methionyl-tRNA formyltransferase of Lactobacillus gasseri (strain ATCC 33323 / DSM 20243 / BCRC 14619 / CIP 102991 / JCM 1131 / KCTC 3163 / NCIMB 11718 / NCTC 13722 / AM63).